A 276-amino-acid chain; its full sequence is Checkpoint protein HUS1B (276 aa).

It belongs to the HUS1 family. Interacts with RAD1 and RAD9B.

The chain is Checkpoint protein HUS1B (Hus1b) from Mus musculus (Mouse).